Here is a 542-residue protein sequence, read N- to C-terminus: Chaperonin GroEL 2 (542 aa).

Residues Thr29–Pro32, Asp86–Thr90, Gly413, Asn477–Ala479, and Asp493 each bind ATP.

The protein belongs to the chaperonin (HSP60) family. As to quaternary structure, forms a cylinder of 14 subunits composed of two heptameric rings stacked back-to-back. Interacts with the co-chaperonin GroES.

The protein resides in the cytoplasm. The enzyme catalyses ATP + H2O + a folded polypeptide = ADP + phosphate + an unfolded polypeptide.. Its function is as follows. Together with its co-chaperonin GroES, plays an essential role in assisting protein folding. The GroEL-GroES system forms a nano-cage that allows encapsulation of the non-native substrate proteins and provides a physical environment optimized to promote and accelerate protein folding. The polypeptide is Chaperonin GroEL 2 (Frankia alni (strain DSM 45986 / CECT 9034 / ACN14a)).